The sequence spans 570 residues: Vacuolar protein sorting-associated protein 45 (570 aa).

Phosphoserine occurs at positions 307 and 441.

The protein belongs to the STXBP/unc-18/SEC1 family. As to quaternary structure, interacts with ZFYVE20. Interacts with STX6.

It is found in the golgi apparatus membrane. The protein resides in the endosome membrane. Its function is as follows. May play a role in vesicle-mediated protein trafficking from the Golgi stack through the trans-Golgi network. In Mus musculus (Mouse), this protein is Vacuolar protein sorting-associated protein 45 (Vps45).